Reading from the N-terminus, the 205-residue chain is High frequency lysogenization protein HflD homolog (205 aa).

This sequence belongs to the HflD family.

It is found in the cytoplasm. The protein resides in the cell inner membrane. This is High frequency lysogenization protein HflD homolog from Shewanella halifaxensis (strain HAW-EB4).